Reading from the N-terminus, the 123-residue chain is Large ribosomal subunit protein bL12 (123 aa).

The protein belongs to the bacterial ribosomal protein bL12 family. Homodimer. Part of the ribosomal stalk of the 50S ribosomal subunit. Forms a multimeric L10(L12)X complex, where L10 forms an elongated spine to which 2 to 4 L12 dimers bind in a sequential fashion. Binds GTP-bound translation factors.

Functionally, forms part of the ribosomal stalk which helps the ribosome interact with GTP-bound translation factors. Is thus essential for accurate translation. This chain is Large ribosomal subunit protein bL12, found in Dehalococcoides mccartyi (strain ATCC BAA-2100 / JCM 16839 / KCTC 5957 / BAV1).